The primary structure comprises 318 residues: Formimidoylglutamase (318 aa).

Residues His130, Asp155, His157, Asp159, Asp246, and Asp248 each contribute to the Mn(2+) site.

This sequence belongs to the arginase family. Mn(2+) serves as cofactor.

The catalysed reaction is N-formimidoyl-L-glutamate + H2O = formamide + L-glutamate. The protein operates within amino-acid degradation; L-histidine degradation into L-glutamate; L-glutamate from N-formimidoyl-L-glutamate (hydrolase route): step 1/1. Its function is as follows. Catalyzes the conversion of N-formimidoyl-L-glutamate to L-glutamate and formamide. The chain is Formimidoylglutamase from Klebsiella pneumoniae (strain 342).